Here is a 239-residue protein sequence, read N- to C-terminus: Ribosomal RNA small subunit methyltransferase G (239 aa).

S-adenosyl-L-methionine-binding positions include Gly-78, Phe-83, 129 to 130, and Arg-148; that span reads AE.

The protein belongs to the methyltransferase superfamily. RNA methyltransferase RsmG family.

The protein localises to the cytoplasm. In terms of biological role, specifically methylates the N7 position of a guanine in 16S rRNA. This is Ribosomal RNA small subunit methyltransferase G from Clostridium perfringens (strain SM101 / Type A).